The following is a 231-amino-acid chain: Eukaryotic translation initiation factor 4E-1 (231 aa).

EIF4G-binding regions lie at residues 56-59 (HPLE) and 66-102 (FDNS…NNIH). Residues 74 to 79 (RQTAWG), lysine 106, and 124 to 125 (WE) contribute to the mRNA site. Cysteine 129 and cysteine 167 are oxidised to a cystine. An EIF4G-binding region spans residues 150–159 (YTLLAMIGHQ). MRNA is bound by residues 174-179 (RAKGEK) and 219-223 (KRLDR).

Belongs to the eukaryotic initiation factor 4E family. As to quaternary structure, EIF4F is a multi-subunit complex, the composition of which varies with external and internal environmental conditions. It is composed of at least EIF4A, EIF4E and EIF4G. EIF4E is also known to interact with other partners. In higher plants two isoforms of EIF4F have been identified, named isoform EIF4F and isoform EIF(iso)4F. Isoform EIF4F has subunits p220 and p26, whereas isoform EIF(iso)4F has subunits p82 and p28. In terms of assembly, (Microbial infection) Interacts with potyvirus viral genome-linked protein (VPg); this interaction is possible in susceptible hosts but impaired in resistant plants. According to the redox status, the Cys-129-Cys-167 disulfide bridge may have a role in regulating protein function by affecting its ability to bind capped mRNA.

It localises to the nucleus. The protein localises to the cytoplasm. Component of the protein complex eIF4F, which is involved in the recognition of the mRNA cap, ATP-dependent unwinding of 5'-terminal secondary structure and recruitment of mRNA to the ribosome. Recognizes and binds the 7-methylguanosine-containing mRNA cap during an early step in the initiation of protein synthesis and facilitates ribosome binding by inducing the unwinding of the mRNAs secondary structures. Key component of recessive resistance to potyviruses. In terms of biological role, (Microbial infection) Susceptibility host factor required for viral infection (e.g. pepper mottle virus (PepMoV), potato virus Y (PVY) and tobacco etch virus (TEV)) by recruiting viral RNAs to the host ribosomal complex via an interaction with viral genome-linked protein (VPg). This Solanum habrochaites (Wild tomato) protein is Eukaryotic translation initiation factor 4E-1.